The chain runs to 237 residues: DNA repair protein RecO (237 aa).

The protein belongs to the RecO family.

Involved in DNA repair and RecF pathway recombination. In Rickettsia conorii (strain ATCC VR-613 / Malish 7), this protein is DNA repair protein RecO.